The primary structure comprises 533 residues: DNA primase large subunit (533 aa).

Residues cysteine 298, cysteine 377, cysteine 393, and cysteine 433 each coordinate [4Fe-4S] cluster. The tract at residues arginine 466–methionine 492 is disordered. The span at isoleucine 480–arginine 490 shows a compositional bias: basic and acidic residues.

The protein belongs to the eukaryotic-type primase large subunit family. Heterodimer of a catalytic subunit Prim1 and a regulatory subunit Prim2, also known as the DNA primase complex. Component of the alpha DNA polymerase complex (also known as the alpha DNA polymerase-primase complex) consisting of four subunits: the catalytic subunit PolA1, the regulatory subunit PolA2, and the primase complex subunits Prim1 and Prim2 respectively. PolA1 associates with the DNA primase complex before association with PolA2. [4Fe-4S] cluster serves as cofactor. As to expression, expressed in embryos (at protein level).

Functionally, regulatory subunit of the DNA primase complex and component of the DNA polymerase alpha complex (also known as the alpha DNA polymerase-primase complex) which play an essential role in the initiation of DNA synthesis. During the S phase of the cell cycle, the DNA polymerase alpha complex (composed of a catalytic subunit PolA1, an accessory subunit PolA2 and two primase subunits, the catalytic subunit Prim1 and the regulatory subunit Prim2) is recruited to DNA at the replicative forks. The primase subunit of the polymerase alpha complex initiates DNA synthesis by oligomerising short RNA primers on both leading and lagging strands. These primers are initially extended by the polymerase alpha catalytic subunit and subsequently transferred to polymerase delta and polymerase epsilon for processive synthesis on the lagging and leading strand, respectively. In the primase complex, both subunits are necessary for the initial di-nucleotide formation, but the extension of the primer depends only on the catalytic subunit. Stabilizes and modulates the activity of the catalytic subunit. This chain is DNA primase large subunit, found in Drosophila melanogaster (Fruit fly).